Here is a 36-residue protein sequence, read N- to C-terminus: uncharacterized protein (36 aa).

Residues 13 to 35 (SVILSPFPCCVLKSYLTVIYISF) traverse the membrane as a helical segment.

The protein localises to the host membrane. This is an uncharacterized protein from Pseudoalteromonas espejiana (Bacteriophage PM2).